The sequence spans 324 residues: Acetyl-coenzyme A carboxylase carboxyl transferase subunit alpha (324 aa).

The 255-residue stretch at 37–291 (ILEEKLENLE…DLMIRKTFEQ (255 aa)) folds into the CoA carboxyltransferase C-terminal domain.

It belongs to the AccA family. As to quaternary structure, acetyl-CoA carboxylase is a heterohexamer composed of biotin carboxyl carrier protein (AccB), biotin carboxylase (AccC) and two subunits each of ACCase subunit alpha (AccA) and ACCase subunit beta (AccD).

It is found in the cytoplasm. The catalysed reaction is N(6)-carboxybiotinyl-L-lysyl-[protein] + acetyl-CoA = N(6)-biotinyl-L-lysyl-[protein] + malonyl-CoA. It functions in the pathway lipid metabolism; malonyl-CoA biosynthesis; malonyl-CoA from acetyl-CoA: step 1/1. Its function is as follows. Component of the acetyl coenzyme A carboxylase (ACC) complex. First, biotin carboxylase catalyzes the carboxylation of biotin on its carrier protein (BCCP) and then the CO(2) group is transferred by the carboxyltransferase to acetyl-CoA to form malonyl-CoA. The sequence is that of Acetyl-coenzyme A carboxylase carboxyl transferase subunit alpha from Bacillus cereus (strain B4264).